Here is a 528-residue protein sequence, read N- to C-terminus: Phosphoenolpyruvate carboxykinase (ATP) (528 aa).

Positions 56, 192, and 198 each coordinate substrate. Residues Lys198, His217, and 233 to 241 contribute to the ATP site; that span reads GLSGTGKTT. Mn(2+) is bound by residues Lys198 and His217. Asp254 is a Mn(2+) binding site. Residues Glu282, Arg319, and Thr444 each contribute to the ATP site. Arg319 is a substrate binding site.

Belongs to the phosphoenolpyruvate carboxykinase (ATP) family. Requires Mn(2+) as cofactor.

It localises to the cytoplasm. It carries out the reaction oxaloacetate + ATP = phosphoenolpyruvate + ADP + CO2. Its pathway is carbohydrate biosynthesis; gluconeogenesis. Its function is as follows. Involved in the gluconeogenesis. Catalyzes the conversion of oxaloacetate (OAA) to phosphoenolpyruvate (PEP) through direct phosphoryl transfer between the nucleoside triphosphate and OAA. The protein is Phosphoenolpyruvate carboxykinase (ATP) of Bacillus cereus (strain 03BB102).